Reading from the N-terminus, the 21-residue chain is Pedibin (21 aa).

The disordered stretch occupies residues 1–21 (AGEDVSHELEEKEKALANHSE).

Morphogenetically active peptide. Active in foot development. The chain is Pedibin from Hydra vulgaris (Hydra).